Here is a 359-residue protein sequence, read N- to C-terminus: DNA polymerase IV (359 aa).

A UmuC domain is found at 4 to 185 (IIHIDMDCYF…LSLRKIPGVG (182 aa)). Positions 8 and 103 each coordinate Mg(2+). Residue Glu104 is part of the active site.

This sequence belongs to the DNA polymerase type-Y family. Monomer. The cofactor is Mg(2+).

Its subcellular location is the cytoplasm. The enzyme catalyses DNA(n) + a 2'-deoxyribonucleoside 5'-triphosphate = DNA(n+1) + diphosphate. Poorly processive, error-prone DNA polymerase involved in untargeted mutagenesis. Copies undamaged DNA at stalled replication forks, which arise in vivo from mismatched or misaligned primer ends. These misaligned primers can be extended by PolIV. Exhibits no 3'-5' exonuclease (proofreading) activity. May be involved in translesional synthesis, in conjunction with the beta clamp from PolIII. In Shewanella sp. (strain MR-4), this protein is DNA polymerase IV.